The chain runs to 488 residues: Malonate-semialdehyde dehydrogenase (488 aa).

The NAD(+) site is built by Ala-150, Phe-152, Lys-176, Glu-179, Arg-180, Ser-229, and Thr-251. Residue Cys-284 is the Nucleophile of the active site. NAD(+) is bound at residue Glu-382.

The protein belongs to the aldehyde dehydrogenase family. IolA subfamily. As to quaternary structure, homotetramer.

It catalyses the reaction 3-oxopropanoate + NAD(+) + CoA + H2O = hydrogencarbonate + acetyl-CoA + NADH + H(+). It carries out the reaction 2-methyl-3-oxopropanoate + NAD(+) + CoA + H2O = propanoyl-CoA + hydrogencarbonate + NADH + H(+). It participates in polyol metabolism; myo-inositol degradation into acetyl-CoA; acetyl-CoA from myo-inositol: step 7/7. In terms of biological role, catalyzes the oxidation of malonate semialdehyde (MSA) and methylmalonate semialdehyde (MMSA) into acetyl-CoA and propanoyl-CoA, respectively. Is involved in a myo-inositol catabolic pathway. Bicarbonate, and not CO2, is the end-product of the enzymatic reaction. This chain is Malonate-semialdehyde dehydrogenase, found in Listeria monocytogenes serotype 4a (strain HCC23).